A 443-amino-acid chain; its full sequence is Ribosomal protein uS12 methylthiotransferase RimO (443 aa).

The 111-residue stretch at 8 to 118 (PKVGFVSLGC…VVNAVHEVVP (111 aa)) folds into the MTTase N-terminal domain. [4Fe-4S] cluster-binding residues include Cys-17, Cys-53, Cys-82, Cys-151, Cys-155, and Cys-158. Residues 137-376 (LTPRHYAYLK…AHQQAISSAR (240 aa)) form the Radical SAM core domain. The TRAM domain occupies 378–443 (QLRIGKEIEV…DEYDMWAEPV (66 aa)).

The protein belongs to the methylthiotransferase family. RimO subfamily. It depends on [4Fe-4S] cluster as a cofactor.

It localises to the cytoplasm. The enzyme catalyses L-aspartate(89)-[ribosomal protein uS12]-hydrogen + (sulfur carrier)-SH + AH2 + 2 S-adenosyl-L-methionine = 3-methylsulfanyl-L-aspartate(89)-[ribosomal protein uS12]-hydrogen + (sulfur carrier)-H + 5'-deoxyadenosine + L-methionine + A + S-adenosyl-L-homocysteine + 2 H(+). Functionally, catalyzes the methylthiolation of an aspartic acid residue of ribosomal protein uS12. The sequence is that of Ribosomal protein uS12 methylthiotransferase RimO from Pseudomonas putida (strain W619).